The sequence spans 510 residues: Maturase K (510 aa).

It belongs to the intron maturase 2 family. MatK subfamily.

The protein localises to the plastid. The protein resides in the chloroplast. Its function is as follows. Usually encoded in the trnK tRNA gene intron. Probably assists in splicing its own and other chloroplast group II introns. This Gratiola officinalis (Hedgehyssop) protein is Maturase K.